The primary structure comprises 432 residues: Ornithine decarboxylase (432 aa).

Lys98 bears the N6-(pyridoxal phosphate)lysine mark. Residues Ser229, Gly266, and 296–299 (EPGR) contribute to the pyridoxal 5'-phosphate site. 341-342 (FD) contacts substrate. Cys377 serves as the catalytic Proton donor; shared with dimeric partner. Asp378 contacts substrate. Tyr407 is a pyridoxal 5'-phosphate binding site.

The protein belongs to the Orn/Lys/Arg decarboxylase class-II family. As to quaternary structure, homodimer. Only the dimer is catalytically active, as the active sites are constructed of residues from both monomers. Requires pyridoxal 5'-phosphate as cofactor.

Its subcellular location is the cytoplasm. It catalyses the reaction L-ornithine + H(+) = putrescine + CO2. The protein operates within amine and polyamine biosynthesis; putrescine biosynthesis via L-ornithine pathway; putrescine from L-ornithine: step 1/1. Inhibited by antizyme (AZ) OAZ1 in response to polyamine levels. AZ inhibits the assembly of the functional homodimer by binding to ODC monomers and targeting them for ubiquitin-independent proteolytic destruction by the 26S proteasome. In terms of biological role, catalyzes the first and rate-limiting step of polyamine biosynthesis that converts ornithine into putrescine, which is the precursor for the polyamines, spermidine and spermine. Polyamines are essential for cell proliferation and are implicated in cellular processes, ranging from DNA replication to apoptosis. In Schizosaccharomyces pombe (strain 972 / ATCC 24843) (Fission yeast), this protein is Ornithine decarboxylase (spe1).